Here is a 184-residue protein sequence, read N- to C-terminus: Endothelial cell-specific molecule 1 (184 aa).

An N-terminal signal peptide occupies residues 1-21; it reads MKSLLLLTTLLVPLHLGMAWS. Residues 24 to 102 form the IGFBP N-terminal domain; sequence YAVDCPEHCD…GDEFGICKDC (79 aa). 6 cysteine pairs are disulfide-bonded: Cys28–Cys51, Cys32–Cys53, Cys37–Cys54, Cys43–Cys57, Cys65–Cys83, and Cys77–Cys99. Residues 145–184 form a disordered region; it reads RTSASHTERDSASGDGNAVREEIGEGNAARPSVMKWLNPR. A compositionally biased stretch (basic and acidic residues) spans 150 to 167; sequence HTERDSASGDGNAVREEI. O-linked (Xyl...) (chondroitin sulfate) serine glycosylation is present at Ser157.

O-glycosylated; contains chondroitin sulfate and dermatan sulfate.

Its subcellular location is the secreted. Its function is as follows. Involved in angiogenesis; promotes angiogenic sprouting. May have potent implications in lung endothelial cell-leukocyte interactions. The chain is Endothelial cell-specific molecule 1 (Esm1) from Mus musculus (Mouse).